Here is a 168-residue protein sequence, read N- to C-terminus: MGWSQRLFGVIRRALSKEVKEQVGTDRFGNKYYYIPEYKNWRGQTIREKRIVEAANKSEIDYEVGDIPTEWEAWIRKTRQTPPTMEEIMKNEKCREEIQMKSQDFYEKEKLLQEESNKELPPPVQTQIKGHASAPYFGKDEPSESPTSTGKTFQPGSWMPHGDKGHSQ.

Over residues 108–118 (KEKLLQEESNK) the composition is skewed to basic and acidic residues. The interval 108 to 168 (KEKLLQEESN…MPHGDKGHSQ (61 aa)) is disordered. Ser133 is modified (phosphoserine). Residues 144–155 (ESPTSTGKTFQP) show a composition bias toward polar residues.

This sequence belongs to the complex I NDUFA12 subunit family. In terms of assembly, interacts with ARMC9.

The protein localises to the mitochondrion. Acts as a molecular chaperone for mitochondrial complex I assembly. Complex I functions in the transfer of electrons from NADH to the respiratory chain. The immediate electron acceptor for the enzyme is believed to be ubiquinone. Is involved in the initial steps of cilia formation, including removal of CP110 from the mother centrioles, docking of membrane vesicles to the mother centrioles, and establishment of the transition zone. This Bos taurus (Bovine) protein is NADH dehydrogenase [ubiquinone] 1 alpha subcomplex assembly factor 2 (NDUFAF2).